A 538-amino-acid chain; its full sequence is Chaperonin GroEL (538 aa).

ATP contacts are provided by residues 29–32, 86–90, glycine 413, 479–481, and aspartate 495; these read TLGP, DGTTT, and DAL.

This sequence belongs to the chaperonin (HSP60) family. As to quaternary structure, forms a cylinder of 14 subunits composed of two heptameric rings stacked back-to-back. Interacts with the co-chaperonin GroES.

Its subcellular location is the cytoplasm. It carries out the reaction ATP + H2O + a folded polypeptide = ADP + phosphate + an unfolded polypeptide.. In terms of biological role, together with its co-chaperonin GroES, plays an essential role in assisting protein folding. The GroEL-GroES system forms a nano-cage that allows encapsulation of the non-native substrate proteins and provides a physical environment optimized to promote and accelerate protein folding. The chain is Chaperonin GroEL from Thermotoga neapolitana.